A 398-amino-acid chain; its full sequence is Immunoglobulin heavy constant alpha 1 (398 aa).

The Extracellular segment spans residues A1–T364. The 93-residue stretch at P6–T98 folds into the Ig-like 1 domain. 2 disulfides stabilise this stretch: C26–C85 and C77–C101. The interval D96–C122 is disordered. Over residues C101–S119 the composition is skewed to pro residues. The O-linked (GalNAc...) serine glycan is linked to S105. O-linked (GalNAc...) threonine glycans are attached at residues T106 and T109. S111 and S113 each carry an O-linked (GalNAc...) serine glycan. O-linked (GalNAc...) threonine glycans are attached at residues T114 and T117. O-linked (GalNAc...) serine glycans are attached at residues S119 and S121. 3 disulfides stabilise this stretch: C123–C180, C147–C204, and C250–C313. 2 Ig-like domains span residues P125–S220 and P228–D330. N-linked (GlcNAc...) (complex) asparagine glycosylation is present at N144. N-linked (GlcNAc...) (complex) asparagine glycosylation occurs at P340. Position 352 (E352) interacts with 3-hydroxy-L-kynurenine. The chain crosses the membrane as a helical span at residues I365 to V383. At T384–Y398 the chain is on the cytoplasmic side.

In terms of assembly, immunoglobulins are composed of two identical heavy chains and two identical light chains; disulfide-linked. Monomeric or polymeric. Part of the secretory IgA (sIgA) complex that consists of two, four or five IgA monomers, and two additional non-Ig polypeptides, namely the JCHAIN and the secretory component (the proteolytic product of PIGR). In terms of processing, 3-Hydroxykynurenine, an oxidized tryptophan metabolite that is common in biological fluids, reacts with alpha-1-microglobulin to form heterogeneous polycyclic chromophores including hydroxanthommatin. The chromophore reacts with accessible cysteines forming non-reducible thioether cross-links with Ig alpha-1 chain C region Cys-352. Post-translationally, N- and O-glycosylated. N-glycan at Asn-144: Hex5HexNAc4.

The protein localises to the secreted. It localises to the cell membrane. Constant region of immunoglobulin heavy chains. Immunoglobulins, also known as antibodies, are membrane-bound or secreted glycoproteins produced by B lymphocytes. In the recognition phase of humoral immunity, the membrane-bound immunoglobulins serve as receptors which, upon binding of a specific antigen, trigger the clonal expansion and differentiation of B lymphocytes into immunoglobulins-secreting plasma cells. Secreted immunoglobulins mediate the effector phase of humoral immunity, which results in the elimination of bound antigens. The antigen binding site is formed by the variable domain of one heavy chain, together with that of its associated light chain. Thus, each immunoglobulin has two antigen binding sites with remarkable affinity for a particular antigen. The variable domains are assembled by a process called V-(D)-J rearrangement and can then be subjected to somatic hypermutations which, after exposure to antigen and selection, allow affinity maturation for a particular antigen. Ig alpha is the major immunoglobulin class in body secretions. The polypeptide is Immunoglobulin heavy constant alpha 1 (Homo sapiens (Human)).